The sequence spans 186 residues: MVKLAAKCILAGDPTVGKTALAQLFRSDGAHFQKNYTLTTGVDLVVKTVPVPDTGDSVELFIFDSAGKELFSEMLDKLWESPNVLCLVYDVTNEQSFTNCSKWLEKARSQIPGTTLPGVLVGNKTDLAGRRVVDVAQAQAWALGQGLECFETSVKEMENYEAPFHYLAKQFHHLYREKLEVFQALV.

GTP is bound by residues 12–19 (GDPTVGKT), 64–68 (DSAGK), and 123–126 (NKTD).

The protein belongs to the small GTPase superfamily. Rab family. In terms of assembly, component of the IFT complex B, at least composed of IFT20, IFT22, IFT25, IFT27, IFT46, IFT52, TRAF3IP1/IFT54, IFT57, IFT74, IFT80, IFT81, and IFT88. Interacts with IFT25. Interacts with IFT70B. Interacts with RABL2/RABL2A; binding is equal in the presence of GTP or GDP. Interacts with IFT88. Interacts with ARL6; recognizes and binds with the GTP-free form of ARL6.

The protein localises to the cell projection. The protein resides in the cilium. It is found in the cytoplasm. It localises to the flagellum. Small GTPase-like component of the intraflagellar transport (IFT) complex B that promotes the exit of the BBSome complex from cilia via its interaction with ARL6. Not involved in entry of the BBSome complex into cilium. Prevents aggregation of GTP-free ARL6. Required for hedgehog signaling. Forms a subcomplex within the IFT complex B with IFT25. Its role in intraflagellar transport is mainly seen in tissues rich in ciliated cells such as kidney and testis. Essential for male fertility, spermiogenesis and sperm flagella formation. Plays a role in the early development of the kidney. May be involved in the regulation of ureteric bud initiation. The chain is Intraflagellar transport protein 27 homolog (IFT27) from Bos taurus (Bovine).